Here is a 153-residue protein sequence, read N- to C-terminus: Histone H2B type W-T (153 aa).

The segment at 1-54 (MATASAMAGPSSETTSEEQLITQEPKEANSTTSQKQSKQRKRGRHGPRRCHSNC) is disordered. The span at 11–36 (SSETTSEEQLITQEPKEANSTTSQKQ) shows a compositional bias: polar residues. Residues 37–52 (SKQRKRGRHGPRRCHS) show a composition bias toward basic residues.

This sequence belongs to the histone H2B family. Can replace the conventional histone H2B in the nucleosome. The nucleosome is a histone octamer containing two molecules each of H2A, H2B, H3 and H4 assembled in one H3-H4 heterotetramer and two H2A-H2B heterodimers. The octamer wraps approximately 147 bp of DNA. In terms of tissue distribution, testis-specific (at protein level).

Its subcellular location is the nucleus membrane. It localises to the chromosome. It is found in the telomere. In terms of biological role, atypical histone H2B that can form nucleosomes structurally and dynamically indistinguishable from those containing conventional H2B. Nucleosomes wrap and compact DNA into chromatin, limiting DNA accessibility to the cellular machineries which require DNA as a template. Histones thereby play a central role in transcription regulation, DNA repair, DNA replication and chromosomal stability. DNA accessibility is regulated via a complex set of post-translational modifications of histones, also called histone code, and nucleosome remodeling. However, unlike conventional H2B, does not recruit chromosome condensation factors and does not participate in the assembly of mitotic chromosomes. May be important for telomere function and play a role in spermatogenesis. This Homo sapiens (Human) protein is Histone H2B type W-T.